The following is a 180-amino-acid chain: MSRVGKLPVAIPNGVTVTVTPDNVVTVKGPKGELVKAMSNKINIAVEDNSVVVTRDNDHKDVRALHGLTRALVNNMVTGVNEGYVKTLELIGVGYRAQLQGKKLVLSLGFSHPVEMEAVSGVEFEVEGGTKVKVKGIDKELVGAVAADIRKWRKPEPYKGKGIKYENEVIRRKEGKTGKK.

Belongs to the universal ribosomal protein uL6 family. As to quaternary structure, part of the 50S ribosomal subunit.

Functionally, this protein binds to the 23S rRNA, and is important in its secondary structure. It is located near the subunit interface in the base of the L7/L12 stalk, and near the tRNA binding site of the peptidyltransferase center. The polypeptide is Large ribosomal subunit protein uL6 (Clostridium botulinum (strain ATCC 19397 / Type A)).